A 123-amino-acid polypeptide reads, in one-letter code: Small ribosomal subunit protein uS12 (123 aa).

Residues 1-28 are disordered; the sequence is MPTIQQLIRKPRQPKVKRSKSQHLESCP. Residues 9–21 show a composition bias toward basic residues; that stretch reads RKPRQPKVKRSKS. 3-methylthioaspartic acid is present on D89.

Belongs to the universal ribosomal protein uS12 family. In terms of assembly, part of the 30S ribosomal subunit. Contacts proteins S8 and S17. May interact with IF1 in the 30S initiation complex.

Its function is as follows. With S4 and S5 plays an important role in translational accuracy. Interacts with and stabilizes bases of the 16S rRNA that are involved in tRNA selection in the A site and with the mRNA backbone. Located at the interface of the 30S and 50S subunits, it traverses the body of the 30S subunit contacting proteins on the other side and probably holding the rRNA structure together. The combined cluster of proteins S8, S12 and S17 appears to hold together the shoulder and platform of the 30S subunit. The polypeptide is Small ribosomal subunit protein uS12 (Dinoroseobacter shibae (strain DSM 16493 / NCIMB 14021 / DFL 12)).